The sequence spans 348 residues: S-adenosyl-L-methionine-dependent methyl transferase PigF (348 aa).

Glutamate 199 contributes to the S-adenosyl-L-methionine binding site. The Proton acceptor role is filled by histidine 247.

The protein belongs to the class I-like SAM-binding methyltransferase superfamily. Cation-independent O-methyltransferase family.

Its pathway is antibiotic biosynthesis; prodigiosin biosynthesis. Its function is as follows. Involved in the biosynthesis of 4-methoxy-2,2'-bipyrrole-5-carbaldehyde (MBC), one of the terminal products involved in the biosynthesis of the red antibiotic prodigiosin (Pig). Catalyzes the transfer of a methyl group from S-adenosyl-L-methionine (SAM) to the hydroxyl group of 4-hydroxy-2,2'-bipyrrole-5-carbaldehyde (HBC) to yield 4-methoxy-2,2'-bipyrrole-5-carbaldehyde (MBC). This is S-adenosyl-L-methionine-dependent methyl transferase PigF from Serratia sp. (strain ATCC 39006) (Prodigiosinella confusarubida).